Consider the following 834-residue polypeptide: Glycerol-3-phosphate acyltransferase (834 aa).

Residues 309 to 314 (CHRSHI) carry the HXXXXD motif motif.

It belongs to the GPAT/DAPAT family.

It is found in the cell inner membrane. It carries out the reaction sn-glycerol 3-phosphate + an acyl-CoA = a 1-acyl-sn-glycero-3-phosphate + CoA. The protein operates within phospholipid metabolism; CDP-diacylglycerol biosynthesis; CDP-diacylglycerol from sn-glycerol 3-phosphate: step 1/3. This is Glycerol-3-phosphate acyltransferase from Pseudomonas aeruginosa (strain LESB58).